A 138-amino-acid chain; its full sequence is Sporulation-specific cell division protein SsgB (138 aa).

This sequence belongs to the SsgA family. Monomer. Interacts with SsgA. Interacts with FtsZ (via N-terminus).

It localises to the cell septum. Involved in sporulation-specific cell division. Required for early stages of sporulation. Important in the process of growth cessation prior to sporulation-specific cell division. Recruits cell division protein FtsZ to the future septum sites and tethers the contractile ring structure (Z ring) to the cytoplasmic membrane during sporulation. Stimulates polymerization and filament length of FtsZ in vitro. In Thermobifida fusca (strain YX), this protein is Sporulation-specific cell division protein SsgB.